A 585-amino-acid polypeptide reads, in one-letter code: Arginine--tRNA ligase (585 aa).

A 'HIGH' region motif is present at residues 131 to 141 (ANPTGPMHVGH).

This sequence belongs to the class-I aminoacyl-tRNA synthetase family. Monomer.

It localises to the cytoplasm. It carries out the reaction tRNA(Arg) + L-arginine + ATP = L-arginyl-tRNA(Arg) + AMP + diphosphate. This Bartonella tribocorum (strain CIP 105476 / IBS 506) protein is Arginine--tRNA ligase.